A 379-amino-acid polypeptide reads, in one-letter code: Class V chitinase CHIT5b (379 aa).

A signal peptide spans 1–26 (MANILNLKHLLTLALILLALATKSST). The 346-residue stretch at 34 to 379 (RVKGIYWLEN…TQASKAWKLV (346 aa)) folds into the GH18 domain. 3 N-linked (GlcNAc...) asparagine glycosylation sites follow: N68, N109, and N128. E147 (proton donor) is an active-site residue. Residues N192, N227, and N241 are each glycosylated (N-linked (GlcNAc...) asparagine).

The protein belongs to the glycosyl hydrolase 18 family. Chitinase class V subfamily.

The enzyme catalyses Random endo-hydrolysis of N-acetyl-beta-D-glucosaminide (1-&gt;4)-beta-linkages in chitin and chitodextrins.. The protein operates within glycan degradation; chitin degradation. Possesses chitinase activity in vitro toward glycol chitin, carboxymethyl-chitin, colloidal chitin, and the chitin oligosaccharides (N-acetylglucosamine) (GlcNAc)6 and (GlcNAc)5. Hydrolyzes (GlcNAc)6 into (GlcNAc)4 and (GlcNAc)2, or two (GlcNAc)3 molecules. Has the capacity to reduce hyphal growth of the fungus Trichoderma viride in an agar-plate bioassay. The protein is Class V chitinase CHIT5b of Medicago truncatula (Barrel medic).